Reading from the N-terminus, the 49-residue chain is uncharacterized protein (49 aa).

Residues 23–43 (LYVISFVLFIVLFFGMFFKLI) traverse the membrane as a helical segment.

It is found in the host membrane. This is an uncharacterized protein from Spiroplasma melliferum (SpV1).